The primary structure comprises 296 residues: Nucleotide-binding protein RSc0403 (296 aa).

8–15 (GMSGSGKS) contributes to the ATP binding site. A GTP-binding site is contributed by 57 to 60 (DIRS). Residues 99–124 (TRRRHPLSIRNGRPDAGNPPSAAKGP) form a disordered region.

Belongs to the RapZ-like family.

In terms of biological role, displays ATPase and GTPase activities. This Ralstonia nicotianae (strain ATCC BAA-1114 / GMI1000) (Ralstonia solanacearum) protein is Nucleotide-binding protein RSc0403.